Here is a 261-residue protein sequence, read N- to C-terminus: Triosephosphate isomerase (261 aa).

Residue Asn-10 to Lys-12 coordinates substrate. Residue His-100 is the Electrophile of the active site. Glu-172 (proton acceptor) is an active-site residue. Residues Gly-178, Ser-218, and Gly-239–Gly-240 contribute to the substrate site.

The protein belongs to the triosephosphate isomerase family. Homodimer.

Its subcellular location is the cytoplasm. The catalysed reaction is D-glyceraldehyde 3-phosphate = dihydroxyacetone phosphate. It participates in carbohydrate biosynthesis; gluconeogenesis. The protein operates within carbohydrate degradation; glycolysis; D-glyceraldehyde 3-phosphate from glycerone phosphate: step 1/1. Involved in the gluconeogenesis. Catalyzes stereospecifically the conversion of dihydroxyacetone phosphate (DHAP) to D-glyceraldehyde-3-phosphate (G3P). The protein is Triosephosphate isomerase of Mycolicibacterium paratuberculosis (strain ATCC BAA-968 / K-10) (Mycobacterium paratuberculosis).